A 466-amino-acid chain; its full sequence is Argininosuccinate lyase (466 aa).

This sequence belongs to the lyase 1 family. Argininosuccinate lyase subfamily.

The protein resides in the cytoplasm. The catalysed reaction is 2-(N(omega)-L-arginino)succinate = fumarate + L-arginine. It participates in amino-acid biosynthesis; L-arginine biosynthesis; L-arginine from L-ornithine and carbamoyl phosphate: step 3/3. The protein is Argininosuccinate lyase of Microcystis aeruginosa (strain NIES-843 / IAM M-2473).